A 265-amino-acid chain; its full sequence is Undecaprenyl-diphosphatase (265 aa).

A run of 8 helical transmembrane segments spans residues 1 to 21 (MDIL…FLPI), 39 to 59 (QGLA…ILYF), 86 to 106 (WCII…GNFI), 112 to 132 (SVSV…FADA), 140 to 160 (LAQM…LAMI), 186 to 206 (FSFL…GLKL), 219 to 239 (VGVL…LSFI), and 244 to 264 (MLPF…LVWF).

It belongs to the UppP family.

It localises to the cell inner membrane. The enzyme catalyses di-trans,octa-cis-undecaprenyl diphosphate + H2O = di-trans,octa-cis-undecaprenyl phosphate + phosphate + H(+). Its function is as follows. Catalyzes the dephosphorylation of undecaprenyl diphosphate (UPP). Confers resistance to bacitracin. This Saccharophagus degradans (strain 2-40 / ATCC 43961 / DSM 17024) protein is Undecaprenyl-diphosphatase.